The sequence spans 413 residues: Serine hydroxymethyltransferase (413 aa).

Residues Leu-117 and 121 to 123 contribute to the (6S)-5,6,7,8-tetrahydrofolate site; that span reads GHL. Lys-226 carries the N6-(pyridoxal phosphate)lysine modification. (6S)-5,6,7,8-tetrahydrofolate is bound by residues Glu-239 and 349–351; that span reads SPF.

It belongs to the SHMT family. Homodimer. The cofactor is pyridoxal 5'-phosphate.

Its subcellular location is the cytoplasm. It catalyses the reaction (6R)-5,10-methylene-5,6,7,8-tetrahydrofolate + glycine + H2O = (6S)-5,6,7,8-tetrahydrofolate + L-serine. Its pathway is one-carbon metabolism; tetrahydrofolate interconversion. It participates in amino-acid biosynthesis; glycine biosynthesis; glycine from L-serine: step 1/1. Catalyzes the reversible interconversion of serine and glycine with tetrahydrofolate (THF) serving as the one-carbon carrier. This reaction serves as the major source of one-carbon groups required for the biosynthesis of purines, thymidylate, methionine, and other important biomolecules. Also exhibits THF-independent aldolase activity toward beta-hydroxyamino acids, producing glycine and aldehydes, via a retro-aldol mechanism. The protein is Serine hydroxymethyltransferase of Bacillus cereus (strain AH187).